Here is a 300-residue protein sequence, read N- to C-terminus: Iron-dependent extradiol dioxygenase (300 aa).

2 consecutive VOC domains span residues 5–120 and 142–270; these read SLAY…AFHG and GLGH…FGCE. Position 145 (His-145) interacts with Fe cation. Substrate contacts are provided by His-200, His-215, Asp-250, and Tyr-256. His-215 is a binding site for Fe cation. Residue Glu-266 coordinates Fe cation.

It belongs to the extradiol ring-cleavage dioxygenase family. As to quaternary structure, homodimer. It depends on Fe(2+) as a cofactor.

The enzyme catalyses 3,4-dihydroxy-9,10-secoandrosta-1,3,5(10)-triene-9,17-dione + O2 = (1E,2Z)-3-hydroxy-5,9,17-trioxo-4,5:9,10-disecoandrosta-1(10),2-dien-4-oate + H(+). It participates in steroid metabolism; cholesterol metabolism. Functionally, catalyzes the meta-cleavage of 3,4-dihydroxy-9,10-seconandrost-1,3,5(10)-triene-9,17-dione (3,4-DHSA) to produce 4,5-9,10-diseco-3-hydroxy-5,9,17-trioxoandrosta-1(10),2-diene-4-oic acid (4,9-DSHA). Also involved in biphenyl and polychlorinated biphenyls (PCBs) degradation. This Rhodococcus jostii (strain RHA1) protein is Iron-dependent extradiol dioxygenase (hsaC).